The chain runs to 96 residues: Small ribosomal subunit protein bS6 (96 aa).

This sequence belongs to the bacterial ribosomal protein bS6 family.

Functionally, binds together with bS18 to 16S ribosomal RNA. In Carboxydothermus hydrogenoformans (strain ATCC BAA-161 / DSM 6008 / Z-2901), this protein is Small ribosomal subunit protein bS6.